Here is a 2300-residue protein sequence, read N- to C-terminus: Protein Ycf2 (2300 aa).

ATP is bound at residue 1642-1649 (GSIGTGRS).

It belongs to the Ycf2 family.

Its subcellular location is the plastid. The protein localises to the chloroplast stroma. Functionally, probable ATPase of unknown function. Its presence in a non-photosynthetic plant (Epifagus virginiana) and experiments in tobacco indicate that it has an essential function which is probably not related to photosynthesis. The polypeptide is Protein Ycf2 (Vitis vinifera (Grape)).